The following is a 54-amino-acid chain: Ovomucoid (54 aa).

Residues 4-54 (VDCSEYPKPACTLEYRPLCGSDSKTYGNKCNFCNAVVESNGTLTLSHFGKC) enclose the Kazal-like domain. 3 disulfide bridges follow: Cys6–Cys36, Cys14–Cys33, and Cys22–Cys54. N-linked (GlcNAc...) asparagine glycosylation is present at Asn43.

Its subcellular location is the secreted. In Alectoris chukar (Chukar partridge), this protein is Ovomucoid.